The primary structure comprises 196 residues: Putative 3-methyladenine DNA glycosylase (196 aa).

Belongs to the DNA glycosylase MPG family.

In Chlorobium phaeovibrioides (strain DSM 265 / 1930) (Prosthecochloris vibrioformis (strain DSM 265)), this protein is Putative 3-methyladenine DNA glycosylase.